Consider the following 258-residue polypeptide: Putative cysteine-rich repeat secretory protein 61 (258 aa).

Positions 1 to 31 are cleaved as a signal peptide; that stretch reads MSSSFIPKRIALVLNLAMVAIQVFFIRSVSS. 2 Gnk2-homologous domains span residues 38 to 140 and 146 to 253; these read YLYH…PTAF and DKNK…IYPF.

This sequence belongs to the cysteine-rich repeat secretory protein family.

It is found in the secreted. In Arabidopsis thaliana (Mouse-ear cress), this protein is Putative cysteine-rich repeat secretory protein 61 (CRRSP61).